The following is a 352-amino-acid chain: tRNA-specific 2-thiouridylase MnmA (352 aa).

ATP is bound by residues 7-14 and leucine 33; that span reads GLSGGVDS. The active-site Nucleophile is the cysteine 94. An intrachain disulfide couples cysteine 94 to cysteine 193. Position 119 (glycine 119) interacts with ATP. Residues 143 to 145 are interaction with tRNA; it reads KDQ. Residue cysteine 193 is the Cysteine persulfide intermediate of the active site. Residues 298 to 299 form an interaction with tRNA region; that stretch reads RY.

It belongs to the MnmA/TRMU family.

The protein localises to the cytoplasm. The catalysed reaction is S-sulfanyl-L-cysteinyl-[protein] + uridine(34) in tRNA + AH2 + ATP = 2-thiouridine(34) in tRNA + L-cysteinyl-[protein] + A + AMP + diphosphate + H(+). Functionally, catalyzes the 2-thiolation of uridine at the wobble position (U34) of tRNA, leading to the formation of s(2)U34. The sequence is that of tRNA-specific 2-thiouridylase MnmA from Trichormus variabilis (strain ATCC 29413 / PCC 7937) (Anabaena variabilis).